The sequence spans 62 residues: Large ribosomal subunit protein bL28 (62 aa).

A disordered region spans residues 1–28 (MARVCTITGRKARSGNSRSHAMNATKRK).

It belongs to the bacterial ribosomal protein bL28 family.

The polypeptide is Large ribosomal subunit protein bL28 (Bacillus anthracis (strain CDC 684 / NRRL 3495)).